We begin with the raw amino-acid sequence, 242 residues long: Carboxy-S-adenosyl-L-methionine synthase (242 aa).

S-adenosyl-L-methionine is bound by residues Tyr-39, Gly-64 to Ser-66, Asp-89 to Asn-90, Asp-117 to Ile-118, Asn-132, and Arg-199.

This sequence belongs to the class I-like SAM-binding methyltransferase superfamily. Cx-SAM synthase family. Homodimer.

It catalyses the reaction prephenate + S-adenosyl-L-methionine = carboxy-S-adenosyl-L-methionine + 3-phenylpyruvate + H2O. In terms of biological role, catalyzes the conversion of S-adenosyl-L-methionine (SAM) to carboxy-S-adenosyl-L-methionine (Cx-SAM). This chain is Carboxy-S-adenosyl-L-methionine synthase, found in Psychromonas ingrahamii (strain DSM 17664 / CCUG 51855 / 37).